The following is a 120-amino-acid chain: Seripauperin-20 (120 aa).

Residues 7–25 (IAAGVAAIAAGASATTTLA) traverse the membrane as a helical segment.

It belongs to the SRP1/TIP1 family. Seripauperin subfamily.

It localises to the membrane. The polypeptide is Seripauperin-20 (PAU20) (Saccharomyces cerevisiae (strain ATCC 204508 / S288c) (Baker's yeast)).